Consider the following 63-residue polypeptide: Prokaryotic ubiquitin-like protein Pup (63 aa).

The disordered stretch occupies residues 1-28 (MPQEFEQIRSADQPLDSEESAPVAGART). Residues 19 to 57 (ESAPVAGARTDDTVDALDAVLDDIESVLETNAEEYVGSF) are ARC ATPase binding. Residue Glu63 forms an Isoglutamyl lysine isopeptide (Glu-Lys) (interchain with K-? in acceptor proteins) linkage.

It belongs to the prokaryotic ubiquitin-like protein family. In terms of assembly, strongly interacts with the proteasome-associated ATPase ARC through a hydrophobic interface; the interacting region of Pup lies in its C-terminal half. There is one Pup binding site per ARC hexamer ring.

It functions in the pathway protein degradation; proteasomal Pup-dependent pathway. Its function is as follows. Protein modifier that is covalently attached to lysine residues of substrate proteins, thereby targeting them for proteasomal degradation. The tagging system is termed pupylation. The polypeptide is Prokaryotic ubiquitin-like protein Pup (Bifidobacterium dentium (strain ATCC 27534 / DSM 20436 / JCM 1195 / Bd1)).